The chain runs to 603 residues: DNA mismatch repair protein MutL (603 aa).

The span at 336 to 346 (EVSKKQKEQQK) shows a compositional bias: basic and acidic residues. Residues 336–372 (EVSKKQKEQQKSEQIQMSFEENRQPKEPPTLFSKPNI) form a disordered region.

This sequence belongs to the DNA mismatch repair MutL/HexB family.

In terms of biological role, this protein is involved in the repair of mismatches in DNA. It is required for dam-dependent methyl-directed DNA mismatch repair. May act as a 'molecular matchmaker', a protein that promotes the formation of a stable complex between two or more DNA-binding proteins in an ATP-dependent manner without itself being part of a final effector complex. The sequence is that of DNA mismatch repair protein MutL from Listeria innocua serovar 6a (strain ATCC BAA-680 / CLIP 11262).